The primary structure comprises 618 residues: Mitochondrial Rho GTPase 2 (618 aa).

The Cytoplasmic segment spans residues Met1 to Ser591. Residues Lys2–His168 enclose the Miro 1 domain. 4 residues coordinate GTP: Gly16, Lys17, Thr18, and Ser19. Position 18 (Thr18) interacts with Mg(2+). The Mg(2+) site is built by Pro35 and Asp57. Residues Ser59, Asn118, Lys119, Asp121, Ala149, and Lys150 each contribute to the GTP site. EF-hand domains are found at residues Ala184 to Asn219 and Leu304 to Met339. Ca(2+) is bound by residues Asp197, Asp199, Asn201, Glu208, Asp317, Asp319, Asp321, and Glu328. The 164-residue stretch at Arg416 to Phe579 folds into the Miro 2 domain. GTP-binding residues include Gly428, Gly430, Lys431, Ser432, and Ala433. Residue Ser432 participates in Mg(2+) binding. Glu474 contributes to the Mg(2+) binding site. Lys528, Asp530, and Cys559 together coordinate GTP. A helical; Anchor for type IV membrane protein transmembrane segment spans residues Phe592–Leu614. Topologically, residues Ala615–Lys618 are mitochondrial intermembrane.

It belongs to the mitochondrial Rho GTPase family. As to quaternary structure, homodimer.

Its subcellular location is the mitochondrion outer membrane. The catalysed reaction is GTP + H2O = GDP + phosphate + H(+). It carries out the reaction ATP + H2O = ADP + phosphate + H(+). It catalyses the reaction UTP + H2O = UDP + phosphate + H(+). Its function is as follows. Atypical mitochondrial nucleoside-triphosphatase (NTPase) involved in mitochondrial trafficking. Probably involved in control of anterograde transport of mitochondria and their subcellular distribution. Can hydrolyze GTP, ATP and UTP. This chain is Mitochondrial Rho GTPase 2 (RHOT2), found in Gallus gallus (Chicken).